We begin with the raw amino-acid sequence, 493 residues long: Ketol-acid reductoisomerase (NADP(+)) (493 aa).

The 195-residue stretch at 14 to 208 (LDQLGRCRFM…GGHRAGVLES (195 aa)) folds into the KARI N-terminal Rossmann domain. NADP(+) is bound by residues 45 to 48 (CGAQ), R68, R76, S78, and 108 to 110 (DKQ). The active site involves H132. An NADP(+)-binding site is contributed by G158. KARI C-terminal knotted domains follow at residues 209 to 345 (SFVA…APKG) and 346 to 486 (ENIK…MTDM). Residues D217, E221, E390, and E394 each contribute to the Mg(2+) site. A substrate-binding site is contributed by S415.

It belongs to the ketol-acid reductoisomerase family. The cofactor is Mg(2+).

The catalysed reaction is (2R)-2,3-dihydroxy-3-methylbutanoate + NADP(+) = (2S)-2-acetolactate + NADPH + H(+). The enzyme catalyses (2R,3R)-2,3-dihydroxy-3-methylpentanoate + NADP(+) = (S)-2-ethyl-2-hydroxy-3-oxobutanoate + NADPH + H(+). It functions in the pathway amino-acid biosynthesis; L-isoleucine biosynthesis; L-isoleucine from 2-oxobutanoate: step 2/4. It participates in amino-acid biosynthesis; L-valine biosynthesis; L-valine from pyruvate: step 2/4. Its function is as follows. Involved in the biosynthesis of branched-chain amino acids (BCAA). Catalyzes an alkyl-migration followed by a ketol-acid reduction of (S)-2-acetolactate (S2AL) to yield (R)-2,3-dihydroxy-isovalerate. In the isomerase reaction, S2AL is rearranged via a Mg-dependent methyl migration to produce 3-hydroxy-3-methyl-2-ketobutyrate (HMKB). In the reductase reaction, this 2-ketoacid undergoes a metal-dependent reduction by NADPH to yield (R)-2,3-dihydroxy-isovalerate. In Histophilus somni (strain 2336) (Haemophilus somnus), this protein is Ketol-acid reductoisomerase (NADP(+)).